The chain runs to 292 residues: 4-hydroxy-tetrahydrodipicolinate synthase (292 aa).

Threonine 45 is a pyruvate binding site. Tyrosine 133 functions as the Proton donor/acceptor in the catalytic mechanism. The Schiff-base intermediate with substrate role is filled by lysine 161. Isoleucine 203 provides a ligand contact to pyruvate.

It belongs to the DapA family. In terms of assembly, homotetramer; dimer of dimers.

The protein resides in the cytoplasm. It carries out the reaction L-aspartate 4-semialdehyde + pyruvate = (2S,4S)-4-hydroxy-2,3,4,5-tetrahydrodipicolinate + H2O + H(+). It participates in amino-acid biosynthesis; L-lysine biosynthesis via DAP pathway; (S)-tetrahydrodipicolinate from L-aspartate: step 3/4. Functionally, catalyzes the condensation of (S)-aspartate-beta-semialdehyde [(S)-ASA] and pyruvate to 4-hydroxy-tetrahydrodipicolinate (HTPA). In Azoarcus sp. (strain BH72), this protein is 4-hydroxy-tetrahydrodipicolinate synthase.